The sequence spans 176 residues: Inner membrane-spanning protein YciB (176 aa).

5 helical membrane passes run 3 to 23 (FLFDLFPIILFFAAFKLWGIF), 49 to 69 (TMLWVSLGVIVVFGGATLVLH), 72 to 92 (KFIQWKPTVLYWLFAVGLVAA), 118 to 138 (KLNLAWAAFFAALGVTNLYVV), and 149 to 169 (FKLFGTTGAIVVFVILQSLWL).

This sequence belongs to the YciB family.

It is found in the cell inner membrane. Plays a role in cell envelope biogenesis, maintenance of cell envelope integrity and membrane homeostasis. The protein is Inner membrane-spanning protein YciB of Burkholderia mallei (strain NCTC 10247).